Consider the following 1028-residue polypeptide: Unconventional myosin-Ic (1028 aa).

Met1 carries the post-translational modification N-acetylmethionine. One can recognise a Myosin motor domain in the interval 12-696; the sequence is GVQDFVLLEN…TLFATEDALE (685 aa). Residues Asn53, Tyr61, 104–113, and 157–161 each bind ATP; these read SGESGAGKTE and NDNSS. N6-methyllysine is present on Lys348. The interval 573–595 is actin-binding; that stretch reads LSKLMEILMSKEPSYIRCIKPND. IQ domains lie at 699-728 and 722-751; these read KQSL…SAIA and MKHS…AVQT. Residues 850-1024 enclose the TH1 domain; the sequence is KDNYPQSVPR…NGHLTVVAPR (175 aa).

This sequence belongs to the TRAFAC class myosin-kinesin ATPase superfamily. Myosin family. As to quaternary structure, interacts (via its IQ motifs) with CALM.

Its subcellular location is the cytoplasm. The protein resides in the cell cortex. The protein localises to the cell projection. It localises to the ruffle membrane. It is found in the cytoplasmic vesicle. Its subcellular location is the stereocilium membrane. Its function is as follows. Myosins are actin-based motor molecules with ATPase activity. Unconventional myosins serve in intracellular movements. Their highly divergent tails are presumed to bind to membranous compartments, which would be moved relative to actin filaments. This Gallus gallus (Chicken) protein is Unconventional myosin-Ic (MYO1C).